The primary structure comprises 177 residues: Cytoglobin-1 (177 aa).

Residues 16-165 form the Globin domain; the sequence is PLTDKERVMI…LCCSIKAVYE (150 aa). Heme b-binding residues include His79 and His111.

Belongs to the globin family. In terms of assembly, monomeric.

The protein localises to the cytoplasm. The protein resides in the nucleus. The enzyme catalyses Fe(II)-heme b-[protein] + nitric oxide + O2 = Fe(III)-heme b-[protein] + nitrate. It catalyses the reaction Fe(III)-heme b-[protein] + nitric oxide + H2O = Fe(II)-heme b-[protein] + nitrite + 2 H(+). The catalysed reaction is 2 superoxide + 2 H(+) = H2O2 + O2. It carries out the reaction H2O2 + AH2 = A + 2 H2O. Functionally, probable multifunctional globin with a hexacoordinated heme iron required for the catalysis of various reactions depending on redox condition of the cell as well as oxygen availability. Has a nitric oxide dioxygenase (NOD) activity and is most probably involved in cell-mediated and oxygen-dependent nitric oxide consumption. Under normoxic conditions functions as a nitric oxide dioxygenase (NOD) but under hypoxic conditions the globin may switch its function to that of a nitrite (NO2) reductase (NiR), generating nitric oxide. Could also have peroxidase and superoxide dismutase activities, detoxifying reactive oxygen species and protecting cells against oxidative stress. Also binds dioxygen with low affinity and could function as an oxygen sensor but has probably no function as a respiratory oxygen carrier. In Oryzias latipes (Japanese rice fish), this protein is Cytoglobin-1.